A 105-amino-acid chain; its full sequence is Thioredoxin (105 aa).

The Thioredoxin domain occupies 1-105; sequence VQVISSYDQF…LQAAITQHSA (105 aa). Residues cysteine 29 and cysteine 32 each act as nucleophile in the active site. A disulfide bond links cysteine 29 and cysteine 32.

Belongs to the thioredoxin family. Monomer.

In terms of biological role, participates in various redox reactions through the reversible oxidation of its active center dithiol to a disulfide and catalyzes dithiol-disulfide exchange reactions. This Malassezia sympodialis (Atopic eczema-associated yeast) protein is Thioredoxin.